The following is an 874-amino-acid chain: Coatomer subunit gamma-1 (874 aa).

Positions 1-11 (MLKKFDKKDEE) are enriched in basic and acidic residues. Residues 1-21 (MLKKFDKKDEESGGGSNPFQH) are disordered. HEAT repeat units follow at residues 64–101 (TEATEAFFAMTKLFQSNDPTLRRMCYLTIKEMSCIAED), 283–320 (KELAPAVSVLQLFCSSPKAALRYAAVRTLNKVAMKHPS), 322–355 (VTACNLDLENLVTDANRSIATLAITTLLKTGSEG), and 356–392 (SIDRLMKQISSFMSEISDEFKVVVVQAISALCQKYPR). Phosphothreonine is present on threonine 594. Residues 609–874 (RQEIFQEQLA…PVDIVLASVG (266 aa)) are interaction with ZNF289/ARFGAP2.

Belongs to the COPG family. In terms of assembly, oligomeric complex that consists of at least the alpha, beta, beta', gamma, delta, epsilon and zeta subunits. Interacts with ZNF289/ARFGAP2 through its C-terminal appendage domain. Interacts with EGFR upon EGF treatment; interaction is essential for regulation of EGF-dependent nuclear transport of EGFR by retrograde trafficking from the Golgi to the ER. The coatomer interacts with KDEL receptors; the interaction is important for retrograde trafficking of KDEL-bearing proteins from the Golgi to the endoplasmic reticulum. Interacts with COPB1. Interacts with TMED10 (via C-terminus). Interacts with TMED2, TMED3, TMED7 and TMED9.

It localises to the cytoplasm. Its subcellular location is the cytosol. The protein localises to the golgi apparatus membrane. The protein resides in the cytoplasmic vesicle. It is found in the COPI-coated vesicle membrane. Its function is as follows. The coatomer is a cytosolic protein complex that binds to dilysine motifs and reversibly associates with Golgi non-clathrin-coated vesicles, which further mediate biosynthetic protein transport from the ER, via the Golgi up to the trans Golgi network. Coatomer complex is required for budding from Golgi membranes, and is essential for the retrograde Golgi-to-ER transport of dilysine-tagged proteins. In mammals, the coatomer can only be recruited by membranes associated to ADP-ribosylation factors (ARFs), which are small GTP-binding proteins; the complex also influences the Golgi structural integrity, as well as the processing, activity, and endocytic recycling of LDL receptors. Required for limiting lipid storage in lipid droplets. Involved in lipid homeostasis by regulating the presence of perilipin family members PLIN2 and PLIN3 at the lipid droplet surface and promoting the association of adipocyte triglyceride lipase (PNPLA2) with the lipid droplet surface to mediate lipolysis. This Bos taurus (Bovine) protein is Coatomer subunit gamma-1 (COPG1).